A 391-amino-acid chain; its full sequence is Phosphoglycerate kinase (391 aa).

Substrate is bound by residues 21–23 (DLN), Arg36, 59–62 (HLGR), Arg114, and Arg147. ATP contacts are provided by residues Lys198, Glu315, and 344–347 (GGDT).

This sequence belongs to the phosphoglycerate kinase family. As to quaternary structure, monomer.

It localises to the cytoplasm. It catalyses the reaction (2R)-3-phosphoglycerate + ATP = (2R)-3-phospho-glyceroyl phosphate + ADP. Its pathway is carbohydrate degradation; glycolysis; pyruvate from D-glyceraldehyde 3-phosphate: step 2/5. The sequence is that of Phosphoglycerate kinase from Haemophilus ducreyi (strain 35000HP / ATCC 700724).